Consider the following 206-residue polypeptide: Small ribosomal subunit protein uS4 (206 aa).

The 61-residue stretch at 96–156 folds into the S4 RNA-binding domain; the sequence is TRLDNVVYRM…EKSRTQARIK (61 aa).

This sequence belongs to the universal ribosomal protein uS4 family. In terms of assembly, part of the 30S ribosomal subunit. Contacts protein S5. The interaction surface between S4 and S5 is involved in control of translational fidelity.

Its function is as follows. One of the primary rRNA binding proteins, it binds directly to 16S rRNA where it nucleates assembly of the body of the 30S subunit. With S5 and S12 plays an important role in translational accuracy. The chain is Small ribosomal subunit protein uS4 from Shewanella halifaxensis (strain HAW-EB4).